Here is a 368-residue protein sequence, read N- to C-terminus: Nuclease EXOG, mitochondrial (368 aa).

The N-terminal 41 residues, 1–41 (MAIKSIASRLRGSRRFLSGFVAGAVVGAAGAGLAALQFFRS), are a transit peptide targeting the mitochondrion. His140 acts as the Proton acceptor in catalysis. Position 171 (Asn171) interacts with a divalent metal cation.

Belongs to the DNA/RNA non-specific endonuclease family. Homodimer. A divalent metal cation serves as cofactor. In terms of tissue distribution, ubiquitous.

The protein resides in the mitochondrion inner membrane. In terms of biological role, endo/exonuclease with nicking activity towards supercoiled DNA, a preference for single-stranded DNA and 5'-3' exonuclease activity. The chain is Nuclease EXOG, mitochondrial (EXOG) from Homo sapiens (Human).